The following is a 985-amino-acid chain: Serine/threonine-protein kinase N2 (985 aa).

An REM-1 1 domain is found at 33–109 (KLDFSDTIVQ…LQELNAHIVV (77 aa)). K77 carries the N6-acetyllysine modification. S110 bears the Phosphoserine mark. The tract at residues 111–136 (DPEDYTDCPRTPDTPNSDSRSSTSNN) is disordered. 2 positions are modified to phosphothreonine: T121 and T124. Over residues 121 to 136 (TPDTPNSDSRSSTSNN) the composition is skewed to low complexity. REM-1 domains lie at 121-204 (TPDT…TNEL) and 207-286 (DNAK…ELPK). Residues S303, S307, S361, and S363 each carry the phosphoserine modification. Positions 352–383 (ATSVALPGWSPSENRSSFMSRTSKSKSGSSRN) are disordered. Positions 354-474 (SVALPGWSPS…LYLEPQGTLF (121 aa)) constitute a C2 domain. Residues 366–382 (RSSFMSRTSKSKSGSSR) show a composition bias toward low complexity. The interval 383–464 (NLLKTDDLSN…FLDNQRHGMA (82 aa)) is necessary to rescue apical junction formation. Phosphoserine occurs at positions 536, 584, 621, and 632. The interval 570–590 (DLEPEAPPAPPRASSLGEIDD) is disordered. Residues 658-917 (FRCCAVLGRG…AEDVKKHPFF (260 aa)) enclose the Protein kinase domain. ATP contacts are provided by residues 664 to 672 (LGRGHFGKV) and K687. D783 (proton acceptor) is an active-site residue. Phosphothreonine; by PDPK1 is present on T817. Positions 918–978 (RLTDWSALLD…EEEQEMFRDF (61 aa)) are necessary for the catalytic activity. In terms of domain architecture, AGC-kinase C-terminal spans 918–985 (RLTDWSALLD…RDFDYVADWC (68 aa)). At S953 the chain carries Phosphoserine. Position 959 is a phosphothreonine (T959). The tract at residues 979–985 (DYVADWC) is negatively regulates the responsiveness of the catalytic activity by cardiolipin and is required for optimal activation by the GTP-bound RhoA.

This sequence belongs to the protein kinase superfamily. AGC Ser/Thr protein kinase family. PKC subfamily. Interacts (via the REM repeats) with RHOA (GTP-bound form preferentially) and interacts (via the REM repeats) with RAC1 (GTP-bound form preferentially); the interactions induce its autophosphorylation. Interacts with RHOC. Interacts with NCK1 (via SH3 domains) and NCK2. Interacts with CD44. Interacts (via C-terminal kinase domain) with PDPK1; the interaction stimulates PDPK1 kinase activity. Interacts with MAP3K2; the interaction activates PRK2 kinase activity in a MAP3K2-independent kinase activity. Interacts (via C-terminal domain) with AKT1; the interaction occurs with the C-terminal cleavage product of PRK2 in apoptotic cells. Interacts (via C-terminus) with PTPN13 (via PDZ 3 domain). Interacts with CDK10. Phosphorylated during mitosis. Autophosphorylated. Phosphorylated. Binding to Rho and Rac promotes autophosphorylation and phosphorylation on serine and threonine residues. Phosphorylated by CDK10. Post-translationally, proteolytically cleaved by caspase-3 during the induction of apoptotic cell death. Activated by limited proteolysis with trypsin. In terms of tissue distribution, expressed in liver (at protein level).

Its subcellular location is the cytoplasm. The protein localises to the nucleus. The protein resides in the membrane. It localises to the cell projection. It is found in the lamellipodium. Its subcellular location is the cytoskeleton. The protein localises to the cleavage furrow. The protein resides in the midbody. It localises to the cell junction. The catalysed reaction is L-seryl-[protein] + ATP = O-phospho-L-seryl-[protein] + ADP + H(+). The enzyme catalyses L-threonyl-[protein] + ATP = O-phospho-L-threonyl-[protein] + ADP + H(+). With respect to regulation, kinase activity is activated upon binding to GTP-bound Rho1/Rac1 GTPases. Activated by caspase-3 (CASP3) cleavage during apoptosis. Activated by lipids, particularly cardiolipin and to a lesser extent by other acidic phospholipids and unsaturated fatty acids. Two specific sites, Thr-817 (activation loop of the kinase domain) and Thr-959 (turn motif), need to be phosphorylated for its full activation. In terms of biological role, PKC-related serine/threonine-protein kinase and Rho/Rac effector protein that participates in specific signal transduction responses in the cell. Plays a role in the regulation of cell cycle progression, actin cytoskeleton assembly, cell migration, cell adhesion, tumor cell invasion and transcription activation signaling processes. Phosphorylates CTTN in hyaluronan-induced astrocytes and hence decreases CTTN ability to associate with filamentous actin. Phosphorylates HDAC5, therefore lead to impair HDAC5 import. Direct RhoA target required for the regulation of the maturation of primordial junctions into apical junction formation in bronchial epithelial cells. Required for G2/M phases of the cell cycle progression and abscission during cytokinesis in a ECT2-dependent manner. Stimulates FYN kinase activity that is required for establishment of skin cell-cell adhesion during keratinocytes differentiation. Regulates epithelial bladder cells speed and direction of movement during cell migration and tumor cell invasion. Inhibits Akt pro-survival-induced kinase activity. Mediates Rho protein-induced transcriptional activation via the c-fos serum response factor (SRF). Involved in the negative regulation of ciliogenesis. In Rattus norvegicus (Rat), this protein is Serine/threonine-protein kinase N2 (Pkn2).